We begin with the raw amino-acid sequence, 227 residues long: Cytochrome c oxidase subunit 2 (227 aa).

Topologically, residues 1-14 (MAYPFQLGLQDATS) are mitochondrial intermembrane. Residues 15–45 (PIMEELMNFHDHTLMIVFLISSLVLYIISLM) traverse the membrane as a helical segment. The Mitochondrial matrix portion of the chain corresponds to 46–59 (LTTKLTHTSTMDAQ). A helical transmembrane segment spans residues 60–87 (EVETIWTILPAAILILIALPSLRILYMM). Over 88 to 227 (DEINNPALTV…YFENWSASMI (140 aa)) the chain is Mitochondrial intermembrane. Cu cation is bound by residues H161, C196, E198, C200, H204, and M207. Mg(2+) is bound at residue E198. Phosphotyrosine is present on Y218.

It belongs to the cytochrome c oxidase subunit 2 family. In terms of assembly, component of the cytochrome c oxidase (complex IV, CIV), a multisubunit enzyme composed of 14 subunits. The complex is composed of a catalytic core of 3 subunits MT-CO1, MT-CO2 and MT-CO3, encoded in the mitochondrial DNA, and 11 supernumerary subunits COX4I, COX5A, COX5B, COX6A, COX6B, COX6C, COX7A, COX7B, COX7C, COX8 and NDUFA4, which are encoded in the nuclear genome. The complex exists as a monomer or a dimer and forms supercomplexes (SCs) in the inner mitochondrial membrane with NADH-ubiquinone oxidoreductase (complex I, CI) and ubiquinol-cytochrome c oxidoreductase (cytochrome b-c1 complex, complex III, CIII), resulting in different assemblies (supercomplex SCI(1)III(2)IV(1) and megacomplex MCI(2)III(2)IV(2)). Found in a complex with TMEM177, COA6, COX18, COX20, SCO1 and SCO2. Interacts with TMEM177 in a COX20-dependent manner. Interacts with COX20. Interacts with COX16. Cu cation is required as a cofactor.

The protein resides in the mitochondrion inner membrane. The catalysed reaction is 4 Fe(II)-[cytochrome c] + O2 + 8 H(+)(in) = 4 Fe(III)-[cytochrome c] + 2 H2O + 4 H(+)(out). Its function is as follows. Component of the cytochrome c oxidase, the last enzyme in the mitochondrial electron transport chain which drives oxidative phosphorylation. The respiratory chain contains 3 multisubunit complexes succinate dehydrogenase (complex II, CII), ubiquinol-cytochrome c oxidoreductase (cytochrome b-c1 complex, complex III, CIII) and cytochrome c oxidase (complex IV, CIV), that cooperate to transfer electrons derived from NADH and succinate to molecular oxygen, creating an electrochemical gradient over the inner membrane that drives transmembrane transport and the ATP synthase. Cytochrome c oxidase is the component of the respiratory chain that catalyzes the reduction of oxygen to water. Electrons originating from reduced cytochrome c in the intermembrane space (IMS) are transferred via the dinuclear copper A center (CU(A)) of subunit 2 and heme A of subunit 1 to the active site in subunit 1, a binuclear center (BNC) formed by heme A3 and copper B (CU(B)). The BNC reduces molecular oxygen to 2 water molecules using 4 electrons from cytochrome c in the IMS and 4 protons from the mitochondrial matrix. The polypeptide is Cytochrome c oxidase subunit 2 (MT-CO2) (Lemniscomys barbarus (Barbary striped grass mouse)).